A 435-amino-acid polypeptide reads, in one-letter code: Fibrous sheath-interacting protein 1 (435 aa).

Disordered stretches follow at residues 1–109 (MPMD…DPKL) and 354–393 (SQSH…ESRL). The segment covering 18-32 (SSSRSRPGSRSSNGS) has biased composition (low complexity). The span at 50-63 (KLNSGQEGHTSNSG) shows a compositional bias: polar residues. The segment covering 64–87 (VEERRNSNDAKWADDSKTKPAKES) has biased composition (basic and acidic residues). A phosphoserine mark is found at S87 and S88. Residues 108–154 (KLEETNAVLQNAIRKMHRLDKLLAKKQCREKEVKKQGLEMRVKLWEE) adopt a coiled-coil conformation. 2 stretches are compositionally biased toward basic and acidic residues: residues 355-371 (QSHK…ERNT) and 378-393 (KILR…ESRL).

It belongs to the FSIP1 family. May interact with AKAP4. In terms of tissue distribution, detected in male germ cells and testis.

The sequence is that of Fibrous sheath-interacting protein 1 (Fsip1) from Mus musculus (Mouse).